The sequence spans 343 residues: Anthranilate phosphoribosyltransferase (343 aa).

5-phospho-alpha-D-ribose 1-diphosphate contacts are provided by residues Gly-85, 88–89 (GD), Thr-93, 95–98 (NIST), 113–121 (KHGGRSVSS), and Ala-125. An anthranilate-binding site is contributed by Gly-85. Ser-97 contributes to the Mg(2+) binding site. Arg-171 serves as a coordination point for anthranilate. Residues Asp-230 and Glu-231 each contribute to the Mg(2+) site.

The protein belongs to the anthranilate phosphoribosyltransferase family. Homodimer. Mg(2+) is required as a cofactor.

The catalysed reaction is N-(5-phospho-beta-D-ribosyl)anthranilate + diphosphate = 5-phospho-alpha-D-ribose 1-diphosphate + anthranilate. It functions in the pathway amino-acid biosynthesis; L-tryptophan biosynthesis; L-tryptophan from chorismate: step 2/5. In terms of biological role, catalyzes the transfer of the phosphoribosyl group of 5-phosphorylribose-1-pyrophosphate (PRPP) to anthranilate to yield N-(5'-phosphoribosyl)-anthranilate (PRA). This chain is Anthranilate phosphoribosyltransferase, found in Aromatoleum aromaticum (strain DSM 19018 / LMG 30748 / EbN1) (Azoarcus sp. (strain EbN1)).